The primary structure comprises 312 residues: Homoserine O-succinyltransferase (312 aa).

Catalysis depends on C142, which acts as the Acyl-thioester intermediate. Residues K163 and S192 each coordinate substrate. H235 (proton acceptor) is an active-site residue. The active site involves E237. R249 provides a ligand contact to substrate.

It belongs to the MetA family.

Its subcellular location is the cytoplasm. It catalyses the reaction L-homoserine + succinyl-CoA = O-succinyl-L-homoserine + CoA. Its pathway is amino-acid biosynthesis; L-methionine biosynthesis via de novo pathway; O-succinyl-L-homoserine from L-homoserine: step 1/1. Transfers a succinyl group from succinyl-CoA to L-homoserine, forming succinyl-L-homoserine. The chain is Homoserine O-succinyltransferase from Alteromonas mediterranea (strain DSM 17117 / CIP 110805 / LMG 28347 / Deep ecotype).